Here is a 121-residue protein sequence, read N- to C-terminus: Large ribosomal subunit protein bL19 (121 aa).

This sequence belongs to the bacterial ribosomal protein bL19 family.

Its function is as follows. This protein is located at the 30S-50S ribosomal subunit interface and may play a role in the structure and function of the aminoacyl-tRNA binding site. The protein is Large ribosomal subunit protein bL19 (rplS) of Chlamydia pneumoniae (Chlamydophila pneumoniae).